The following is a 346-amino-acid chain: MIKVGIVGSTGYTGAELVRLLTRHPHVELVGLTSRSYVGEHYWRVYPHLKNYTDLQCEELDLPRLVDRADVLFTALPHGHSMDVAREVLSRGKKLVDLGADFRFRDQAVYESWYRVPHTAAELLPRAVYGLPEINREALRGADLVANPGCYPTASILGLAPLLAKGLIDPGEIVIDAKSGVSGAGRGFSLKTHFAETNENFQAYNVGVHRHTPEIEEQLGRLAGRDLTVAFTPHLVPMVRGILATIYTRPAVLPDRDELYELYADYYREEPFVRVLPPGMLPQTKAVAGTNHCDLAVVPDPRTGRVIVLSAIDNLMKGASGQAVQNLNLIFGLDETTGLVFPGLYP.

C150 is a catalytic residue.

It belongs to the NAGSA dehydrogenase family. Type 1 subfamily.

The protein localises to the cytoplasm. The enzyme catalyses N-acetyl-L-glutamate 5-semialdehyde + phosphate + NADP(+) = N-acetyl-L-glutamyl 5-phosphate + NADPH + H(+). It functions in the pathway amino-acid biosynthesis; L-arginine biosynthesis; N(2)-acetyl-L-ornithine from L-glutamate: step 3/4. Functionally, catalyzes the NADPH-dependent reduction of N-acetyl-5-glutamyl phosphate to yield N-acetyl-L-glutamate 5-semialdehyde. The protein is N-acetyl-gamma-glutamyl-phosphate reductase of Desulforudis audaxviator (strain MP104C).